The chain runs to 68 residues: Serine rich endogenous peptide 13 (68 aa).

An N-terminal signal peptide occupies residues 1-31 (MATKASNLVVFLLSLLLLFLLISFQVGVADA). The tract at residues 33 to 68 (RNKRQGQEQRVDYDYPRPPTAPIYLPPSKSRKGKGP) is disordered. The segment covering 37–47 (QGQEQRVDYDY) has biased composition (basic and acidic residues). A compositionally biased stretch (pro residues) spans 48 to 57 (PRPPTAPIYL). The short motif at 54 to 68 (PIYLPPSKSRKGKGP) is the SCOOP motif element. The SxS motif essential for MIK2 binding motif lies at 60-62 (SKS).

Belongs to the serine rich endogenous peptide (SCOOP) phytocytokine family. As to quaternary structure, interacts with MIK2 (via extracellular leucine-rich repeat domain); this interaction triggers the formation of complex between MIK2 and the BAK1/SERK3 and SERK4 coreceptors, and subsequent BAK1 activation by phosphorylation. As to expression, mostly expressed in stems and flowers and, to a lower extent, in seedlings shoots, roots, siliques, seeds and leaves.

The protein resides in the cell membrane. The protein localises to the secreted. It is found in the extracellular space. Its subcellular location is the apoplast. In terms of biological role, brassicaceae-specific phytocytokine (plant endogenous peptide released into the apoplast) perceived by MIK2 in a BAK1/SERK3 and SERK4 coreceptors-dependent manner, that modulates various physiological and antimicrobial processes including growth prevention and reactive oxygen species (ROS) response regulation. Promotes the expression of immune-related marker genes (e.g. WRKY30, WRKY33 and CYP81F2) in a MIK2-dependent manner. Inhibits root growth and regulates root meristems. Prevents general growth and development. Exhibits antibacterial effects against Pseudomonas syringae pv. tomato DC3000, Ralstonia solanacearum, Bacillus subtilis and Agrobacterium tumefaciens, thus being an antimicrobial peptide (AMP). The sequence is that of Serine rich endogenous peptide 13 from Arabidopsis thaliana (Mouse-ear cress).